The primary structure comprises 567 residues: Interferon lambda receptor 1 (567 aa).

Positions 1-22 are cleaved as a signal peptide; that stretch reads MSAWRIRVLATLCFLWQPRVHG. Residues 23–229 are Extracellular-facing; it reads QLPPPQNVTL…YEGEWKFPFS (207 aa). The Fibronectin type-III domain maps to 26–121; sequence PPQNVTLLSK…KSQFKEYHLD (96 aa). Asn29 carries an N-linked (GlcNAc...) asparagine glycan. Intrachain disulfides connect Cys74–Cys82, Cys86–Cys149, and Cys193–Cys215. A glycan (N-linked (GlcNAc...) asparagine) is linked at Asn141. A helical membrane pass occupies residues 230 to 250; that stretch reads ATIPVFVLLILLTSASIIWLL. The Cytoplasmic portion of the chain corresponds to 251–567; it reads KQDAKHKKMP…YQHSHYMRRS (317 aa).

The protein belongs to the type II cytokine receptor family. In terms of assembly, heterodimer with IL10RB.

It localises to the membrane. The IFNLR1/IL10RB dimer is a receptor for the cytokine ligands IFNL2 and IFNL3 and mediates their antiviral activity. The ligand/receptor complex stimulate the activation of the JAK/STAT signaling pathway leading to the expression of IFN-stimulated genes (ISG), which contribute to the antiviral state. Determines the cell type specificity of the lambda interferon action. Shows a more restricted pattern of expression in the epithelial tissues thereby limiting responses to lambda interferons primarily to epithelial cells of the respiratory, gastrointestinal, and reproductive tracts. This chain is Interferon lambda receptor 1 (IFNLR1), found in Gallus gallus (Chicken).